The chain runs to 499 residues: Tektin-like protein 1 (499 aa).

Coiled coils occupy residues 197–227 (SMLT…LKTL) and 297–317 (LNEA…MAKN). Phosphotyrosine is present on Tyr-372.

Microtubule inner protein component of sperm flagellar doublet microtubules.

Its subcellular location is the cytoplasm. It is found in the cytoskeleton. It localises to the flagellum axoneme. Microtubule inner protein (MIP) part of the dynein-decorated doublet microtubules (DMTs) in sperm flagellar axoneme, which is required for motile flagellum beating. Forms an extensive interaction network cross-linking the lumen of axonemal doublet microtubules. The protein is Tektin-like protein 1 of Homo sapiens (Human).